A 103-amino-acid polypeptide reads, in one-letter code: Small ribosomal subunit protein uS10 (103 aa).

This sequence belongs to the universal ribosomal protein uS10 family. As to quaternary structure, part of the 30S ribosomal subunit.

Functionally, involved in the binding of tRNA to the ribosomes. The protein is Small ribosomal subunit protein uS10 of Helicobacter hepaticus (strain ATCC 51449 / 3B1).